Reading from the N-terminus, the 138-residue chain is Pleckstrin homology-like domain family A member 2 (138 aa).

Residues 11–105 (VLKEGELEKR…WNAVITMALI (95 aa)) form the PH domain. A disordered region spans residues 117–138 (KTRQDDESGSPGQHESRMARAP).

The protein belongs to the PHLDA2 family.

It is found in the cytoplasm. Its subcellular location is the membrane. Functionally, plays a role in regulating placenta growth. May act via its PH domain that competes with other PH domain-containing proteins, thereby preventing their binding to membrane lipids. In Salmo salar (Atlantic salmon), this protein is Pleckstrin homology-like domain family A member 2 (phlda2).